A 256-amino-acid polypeptide reads, in one-letter code: Probable aquaporin TIP-type alpha (256 aa).

The Cytoplasmic segment spans residues 1-24 (MATRRYSFGRTDEATHPDSMRASL). S7 carries the phosphoserine; by CPK modification. A helical transmembrane segment spans residues 25–44 (AEFASTFIFVFAGEGSGLAL). At 45–57 (VKIYQDSAFSAGE) the chain is on the vacuolar side. The chain crosses the membrane as a helical span at residues 58–77 (LLALALAHAFALFAAVSASM). Residues 78–102 (HVSGGHVNPAVSFGALIGGRISVIR) are Cytoplasmic-facing. Residues 85–87 (NPA) carry the NPA 1 motif. A helical transmembrane segment spans residues 103–121 (AVYYWIAQLLGSIVAALVL). The Vacuolar portion of the chain corresponds to 122–143 (RLVTNNMRPSGFHVSPGVGVGH). The helical transmembrane segment at 144-164 (MFILEVVMTFGLMYTVYGTAI) threads the bilayer. Residues 165 to 169 (DPKRG) lie on the Cytoplasmic side of the membrane. Residues 170-189 (AVSYIAPLAIGLIVGANILV) traverse the membrane as a helical segment. Over 190 to 216 (GGPFDGACMNPALAFGPSLVGWQWHQH) the chain is Vacuolar. The NPA 2 motif lies at 199–201 (NPA). The helical transmembrane segment at 217 to 239 (WIFWVGPLLGAALAALVYEYAVI) threads the bilayer. Over 240 to 256 (PIEPPPHHHQPLATEDY) the chain is Cytoplasmic.

Belongs to the MIP/aquaporin (TC 1.A.8) family. TIP (TC 1.A.8.10) subfamily. In terms of processing, phosphorylated by a tonoplast-bound calcium-dependent protein kinase. As to expression, found in all seed tissues that are alive at seed maturity, but not in tissues that lose viability during seed maturation.

Its subcellular location is the vacuole membrane. In terms of biological role, channel protein in tonoplast. These proteins may allow the diffusion of amino acids and/or peptides from the vacuolar compartment to the cytoplasm. The polypeptide is Probable aquaporin TIP-type alpha (Phaseolus vulgaris (Kidney bean)).